Consider the following 547-residue polypeptide: Chaperonin GroEL (547 aa).

Residues 30-33 (TLGP), Lys-51, 87-91 (DGTTT), Gly-415, and Asp-495 contribute to the ATP site.

This sequence belongs to the chaperonin (HSP60) family. As to quaternary structure, forms a cylinder of 14 subunits composed of two heptameric rings stacked back-to-back. Interacts with the co-chaperonin GroES.

It localises to the cytoplasm. The catalysed reaction is ATP + H2O + a folded polypeptide = ADP + phosphate + an unfolded polypeptide.. Together with its co-chaperonin GroES, plays an essential role in assisting protein folding. The GroEL-GroES system forms a nano-cage that allows encapsulation of the non-native substrate proteins and provides a physical environment optimized to promote and accelerate protein folding. The protein is Chaperonin GroEL of Allorhizobium ampelinum (strain ATCC BAA-846 / DSM 112012 / S4) (Agrobacterium vitis (strain S4)).